A 130-amino-acid chain; its full sequence is Glycine cleavage system H protein (130 aa).

The region spanning 25–107 (IATIGITEFA…YGEGWFLKVR (83 aa)) is the Lipoyl-binding domain. K66 is subject to N6-lipoyllysine.

This sequence belongs to the GcvH family. In terms of assembly, the glycine cleavage system is composed of four proteins: P, T, L and H. It depends on (R)-lipoate as a cofactor.

In terms of biological role, the glycine cleavage system catalyzes the degradation of glycine. The H protein shuttles the methylamine group of glycine from the P protein to the T protein. In Nostoc sp. (strain PCC 7120 / SAG 25.82 / UTEX 2576), this protein is Glycine cleavage system H protein.